The primary structure comprises 915 residues: WD repeat-containing protein 44 (915 aa).

Over residues 1 to 14 (MASESDTEEFYDAP) the composition is skewed to acidic residues. The segment at 1 to 24 (MASESDTEEFYDAPEDVHLGTGYP) is disordered. A2 bears the N-acetylalanine mark. Positions 2 to 173 (ASESDTEEFY…SSGEQLDASG (172 aa)) are binding activity. At S3 the chain carries Phosphoserine. The FFAT-like motif motif lies at 9 to 15 (EFYDAPE). Y11 is subject to Phosphotyrosine. Residues S27, S50, S66, S71, S81, and S126 each carry the phosphoserine modification. Disordered stretches follow at residues 79–102 (DDSL…VAGT), 117–174 (LQQD…ASGL), and 208–282 (VEEV…PKEN). Positions 114-139 (EHELQQDSEKAESQNVAEESELETQK) form a coiled coil. Positions 146 to 155 (TCEKSEKTVD) are enriched in basic and acidic residues. Phosphothreonine occurs at positions 161 and 221. Positions 213 to 259 (PAKPPRHLTPEPDIVASTKKPVPARPPPPTNFPPPRPPPPSRPAPPP) are important for interaction with ARHGAP26 AND ARHGAP10. Residues 235–258 (PARPPPPTNFPPPRPPPPSRPAPP) show a composition bias toward pro residues. Position 264 is a phosphoserine (S264). Positions 264–280 (SELEFEALKTPDLDVPK) are enriched in basic and acidic residues. At T273 the chain carries Phosphothreonine. The tract at residues 336–349 (VMGPQRPRSNSGRE) is important for interaction with RAB11A. Phosphoserine is present on residues S344 and S346. Residues T351 and T403 each carry the phosphothreonine modification. 2 disordered regions span residues 399–425 (SNDA…RLKQ) and 461–481 (DEVF…GMPY). A phosphoserine mark is found at S405, S472, S473, and S474. Residues 469–478 (DDPSSSDDEG) are compositionally biased toward acidic residues. Y481 is subject to Phosphotyrosine. A WD 1 repeat occupies 511–550 (EHMGAVWTMKFSHCGRLLASAGQDNIVRIWALKNAFDYFN). A disordered region spans residues 559–593 (EGRVSPSPSQESLSSSKSDTDMGVCSGTDEDPDDK). Residues S563 and S567 each carry the phosphoserine modification. Positions 563–575 (SPSPSQESLSSSK) are enriched in low complexity. WD repeat units follow at residues 607 to 645 (GHTA…CLCC), 647 to 687 (QHID…VALW), 692 to 731 (GQTK…YHTQ), 742 to 781 (KVGR…LSMK), 786 to 825 (VNSS…SKFT), 840 to 880 (AHNA…EVLD), and 882 to 915 (TSTG…KTVS).

Interacts with the GTP-bound form of RAB11 when membrane-associated. Interacts with GRAF1/ARHGAP26 or GRAF2/ARHGAP10; the interaction connects the endoplasmic reticulum (ER) with the endosomal tubule. Interacts (via FFAT-like motif) with VAPA (via MSP domain) or VAPB (via MSP domain); the interaction connects the ER with the endosomal tubule. Does not bind to other Rab and Rho small G proteins. In terms of processing, phosphorylated by ATK1; the phosphorylation stabilizes its interaction with RAB11A and RAB11B.

The protein resides in the cytoplasm. The protein localises to the cytosol. It localises to the perinuclear region. It is found in the endosome membrane. Its subcellular location is the golgi apparatus. The protein resides in the trans-Golgi network. In terms of biological role, downstream effector for Rab11 which regulates Rab11 intracellular membrane trafficking functions such as endocytic recycling, intracellular ciliogenesis and protein export. ATK1-mediated phosphorylation of WDR44 induces binding to Rab11 which activates endocytic recycling of transferrin receptor back to the plasma membrane. When bound to Rab11, prevents the formation of the ciliogenic Rab11-Rabin8/RAB3IP-RAB11FIP3 complex, therefore inhibiting preciliary trafficking and ciliogenesis. Participates in neo-synthesized protein export by connecting the endoplasmic reticulum (ER) with the endosomal tubule via direct interactions with the integral ER proteins VAPA or VAPB and the endosomal protein GRAFs (GRAF1/ARHGAP26 or GRAF2/ARHGAP10), which facilitates the transfer of proteins such as E-cadherin, MPP14 and CFTR into a Rab8-Rab10-Rab11-dependent export route. This chain is WD repeat-containing protein 44, found in Mus musculus (Mouse).